The chain runs to 125 residues: Small ribosomal subunit protein uS12 (125 aa).

Asp89 is modified (3-methylthioaspartic acid).

It belongs to the universal ribosomal protein uS12 family. In terms of assembly, part of the 30S ribosomal subunit. Contacts proteins S8 and S17. May interact with IF1 in the 30S initiation complex.

Functionally, with S4 and S5 plays an important role in translational accuracy. Interacts with and stabilizes bases of the 16S rRNA that are involved in tRNA selection in the A site and with the mRNA backbone. Located at the interface of the 30S and 50S subunits, it traverses the body of the 30S subunit contacting proteins on the other side and probably holding the rRNA structure together. The combined cluster of proteins S8, S12 and S17 appears to hold together the shoulder and platform of the 30S subunit. The chain is Small ribosomal subunit protein uS12 from Clostridium botulinum (strain Alaska E43 / Type E3).